A 381-amino-acid chain; its full sequence is Dual specificity protein phosphatase 6 (381 aa).

The Rhodanese domain maps to 30–148 (GNERLLLMDC…FQAEFSLHCE (119 aa)). The disordered stretch occupies residues 176 to 203 (SSSDIESDLDRDPNSATDSDGSPLSNSQ). Residues 189-203 (NSATDSDGSPLSNSQ) show a composition bias toward polar residues. The region spanning 206-349 (FPVEILPFLY…LLDFERTLGL (144 aa)) is the Tyrosine-protein phosphatase domain. Cys293 functions as the Phosphocysteine intermediate in the catalytic mechanism.

The protein belongs to the protein-tyrosine phosphatase family. Non-receptor class dual specificity subfamily. Interacts with MAPK1/ERK2. In terms of processing, ubiquitinated by the SCF(FBXO31) complex, leading to its proteasomal degradation. Expressed in keratinocytes (at protein level).

Its subcellular location is the cytoplasm. It carries out the reaction O-phospho-L-tyrosyl-[protein] + H2O = L-tyrosyl-[protein] + phosphate. The catalysed reaction is O-phospho-L-seryl-[protein] + H2O = L-seryl-[protein] + phosphate. It catalyses the reaction O-phospho-L-threonyl-[protein] + H2O = L-threonyl-[protein] + phosphate. Its function is as follows. Dual specificity protein phosphatase, which mediates dephosphorylation and inactivation of MAP kinases. Has a specificity for the ERK family. Plays an important role in alleviating chronic postoperative pain. Necessary for the normal dephosphorylation of the long-lasting phosphorylated forms of spinal MAPK1/3 and MAP kinase p38 induced by peripheral surgery, which drives the resolution of acute postoperative allodynia. Also important for dephosphorylation of MAPK1/3 in local wound tissue, which further contributes to resolution of acute pain. Promotes cell differentiation by regulating MAPK1/MAPK3 activity and regulating the expression of AP1 transcription factors. The polypeptide is Dual specificity protein phosphatase 6 (DUSP6) (Homo sapiens (Human)).